We begin with the raw amino-acid sequence, 421 residues long: Imidazolonepropionase (421 aa).

2 residues coordinate Fe(3+): His-81 and His-83. Residues His-81 and His-83 each coordinate Zn(2+). 4-imidazolone-5-propanoate-binding residues include Arg-90, Tyr-153, and His-186. Tyr-153 is an N-formimidoyl-L-glutamate binding site. His-251 lines the Fe(3+) pocket. His-251 is a binding site for Zn(2+). Glu-254 serves as a coordination point for 4-imidazolone-5-propanoate. Asp-326 provides a ligand contact to Fe(3+). Asp-326 lines the Zn(2+) pocket. N-formimidoyl-L-glutamate contacts are provided by Asn-328 and Gly-330. Residue Ser-331 coordinates 4-imidazolone-5-propanoate.

The protein belongs to the metallo-dependent hydrolases superfamily. HutI family. It depends on Zn(2+) as a cofactor. Requires Fe(3+) as cofactor.

The protein resides in the cytoplasm. The enzyme catalyses 4-imidazolone-5-propanoate + H2O = N-formimidoyl-L-glutamate. The protein operates within amino-acid degradation; L-histidine degradation into L-glutamate; N-formimidoyl-L-glutamate from L-histidine: step 3/3. In terms of biological role, catalyzes the hydrolytic cleavage of the carbon-nitrogen bond in imidazolone-5-propanoate to yield N-formimidoyl-L-glutamate. It is the third step in the universal histidine degradation pathway. The chain is Imidazolonepropionase from Streptococcus pyogenes serotype M18 (strain MGAS8232).